The following is a 65-amino-acid chain: Putative per-hexamer repeat protein 2 (65 aa).

This Mus musculus (Mouse) protein is Putative per-hexamer repeat protein 2 (Phxr2).